The following is a 111-amino-acid chain: Ribonuclease P protein component (111 aa).

It belongs to the RnpA family. In terms of assembly, consists of a catalytic RNA component (M1 or rnpB) and a protein subunit.

The enzyme catalyses Endonucleolytic cleavage of RNA, removing 5'-extranucleotides from tRNA precursor.. RNaseP catalyzes the removal of the 5'-leader sequence from pre-tRNA to produce the mature 5'-terminus. It can also cleave other RNA substrates such as 4.5S RNA. The protein component plays an auxiliary but essential role in vivo by binding to the 5'-leader sequence and broadening the substrate specificity of the ribozyme. This Streptococcus thermophilus (strain CNRZ 1066) protein is Ribonuclease P protein component.